A 712-amino-acid chain; its full sequence is Protein SDA1 homolog (712 aa).

Position 234 is a phosphothreonine (Thr234). Ser236 carries the post-translational modification Phosphoserine. 2 disordered regions span residues 488–573 (TIDI…DMRI) and 662–712 (VNEH…KKMK). Composition is skewed to acidic residues over residues 491–501 (IESEDDTDSND) and 516–559 (GADD…ESGE). Basic and acidic residues predominate over residues 560–572 (ESAKAKKEKKDMR). 2 stretches are compositionally biased toward basic residues: residues 671 to 692 (REKRKTKNFGMLRHKARSKVKK) and 700 to 712 (ALRKHLLHQKKMK).

The protein belongs to the SDA1 family.

It is found in the nucleus. The protein resides in the nucleolus. Required for 60S pre-ribosomal subunits export to the cytoplasm. The polypeptide is Protein SDA1 homolog (Mys45A) (Drosophila melanogaster (Fruit fly)).